Reading from the N-terminus, the 510-residue chain is Serine/threonine-protein kinase UL13 homolog (510 aa).

Residues 1-63 are disordered; the sequence is MDADDTPPNL…WANPSTATCM (63 aa). Positions 132–458 constitute a Protein kinase domain; it reads RDRPRFAGRG…RRIFQCHAVR (327 aa). Residues 138–146 and K157 each bind ATP; that span reads AGRGTYGRV. The active-site Proton acceptor is the D257.

Belongs to the protein kinase superfamily. Ser/Thr protein kinase family. In terms of processing, autophosphorylated.

Its subcellular location is the virion tegument. It is found in the host nucleus. The enzyme catalyses L-seryl-[protein] + ATP = O-phospho-L-seryl-[protein] + ADP + H(+). It carries out the reaction L-threonyl-[protein] + ATP = O-phospho-L-threonyl-[protein] + ADP + H(+). In terms of biological role, multifunctional serine/threonine kinase that plays a role in several processes including egress of virus particles from the nucleus, modulation of the actin cytoskeleton and regulation of viral and cellular gene expression. Regulates the nuclear localization of viral envelopment factor proteins 24 and 27, by phosphorylating the protein kinase ORF66, indicating a role in nuclear egress. Disrupts host nuclear lamins, including LMNA and LMNB1. Phosphorylates the viral Fc receptor composed of glycoproteins E (gE) and I (gI). Phosphorylation of glycoprotein E (gE) by UL13 alters its subcellular localization, from the host early endosome to the plasma membrane. Participates in the transcriptional regulation of cellular and viral mRNAs mainly by phosphorylating the viral transcriptional regulator IE63. The protein is Serine/threonine-protein kinase UL13 homolog of Varicella-zoster virus (strain Dumas) (HHV-3).